A 138-amino-acid polypeptide reads, in one-letter code: Secreted RxLR effector protein 91 (138 aa).

Residues 1-18 (MVIPHIICLPMALHLWTC) form the signal peptide. The RxLR signature appears at 34-37 (RRLR). A glycan (N-linked (GlcNAc...) asparagine) is linked at Asn93.

Belongs to the RxLR effector family.

It localises to the secreted. It is found in the host nucleus. In terms of biological role, secreted effector that completely suppresses the host cell death induced by cell death-inducing proteins. In Plasmopara viticola (Downy mildew of grapevine), this protein is Secreted RxLR effector protein 91.